The sequence spans 341 residues: Eukaryotic translation initiation factor 2 subunit 1 (341 aa).

The region spanning 16-87 is the S1 motif domain; it reads EDVVMVNVLS…EKGYIDLSKR (72 aa). The residue at position 51 (S51) is a Phosphoserine. The interval 293–341 is disordered; sequence AENAQVAGDDDEEDGADQEGMQFDPEKEFNHKGSGAGRANEEDEEEEED. Acidic residues predominate over residues 300 to 309; it reads GDDDEEDGAD.

This sequence belongs to the eIF-2-alpha family. In terms of assembly, eukaryotic translation initiation factor 2 eIF2 is a heterotrimeric complex composed of an alpha, a beta and a gamma subunit. In terms of processing, phosphorylation of eIF-2-alpha impairs the recycling of eIF-2 between successive rounds of initiation and thus leads to inhibition of translation.

It localises to the cytoplasm. It is found in the cytosol. In terms of biological role, eIF-2 functions in the early steps of protein synthesis by forming a ternary complex with GTP and initiator tRNA. This pre-initiation complex mediates ribosomal recognition of a start codon during the scanning process of the leader region. This Drosophila melanogaster (Fruit fly) protein is Eukaryotic translation initiation factor 2 subunit 1.